Reading from the N-terminus, the 393-residue chain is Leucine aminopeptidase 1 (393 aa).

The N-terminal stretch at 1–18 (MKLSQVSALAACVPAATA) is a signal peptide. Positions 19–84 (RFVELMEADH…GSQGLRIKES (66 aa)) are excised as a propeptide. N-linked (GlcNAc...) asparagine glycosylation occurs at asparagine 176. Residues histidine 184, aspartate 202, glutamate 241, and aspartate 268 each contribute to the Zn(2+) site. Cysteine 317 and cysteine 321 are joined by a disulfide. Histidine 350 lines the Zn(2+) pocket.

Belongs to the peptidase M28 family. M28E subfamily. Monomer. It depends on Zn(2+) as a cofactor.

The protein localises to the secreted. Its function is as follows. Extracellular aminopeptidase that allows assimilation of proteinaceous substrates. This chain is Leucine aminopeptidase 1 (LAP1), found in Metarhizium robertsii (strain ARSEF 23 / ATCC MYA-3075) (Metarhizium anisopliae (strain ARSEF 23)).